The primary structure comprises 1230 residues: DNA-directed RNA polymerase, mitochondrial (1230 aa).

A mitochondrion-targeting transit peptide spans 1 to 41 (MSALCWGRGAAGLKRALRPCGRPGLPGKEGTAGGVCGPRRS). 3 disordered regions span residues 18–55 (RPCG…DRRK), 95–115 (GSGD…KDAT), and 731–750 (VPAP…PHSA). Over residues 732-744 (PAPPSEAPQPPEA) the composition is skewed to pro residues. A mediates interaction with TEFM region spans residues 802–1230 (FRGRTYPCPP…QVKRSTYFFS (429 aa)). Catalysis depends on residues D922, K991, and D1151.

It belongs to the phage and mitochondrial RNA polymerase family. As to quaternary structure, homodimer. Component of the mitochondrial transcription initiation complex, composed at least of TFB2M, TFAM and POLRMT. In this complex TFAM recruits POLRMT to the promoter whereas TFB2M induces structural changes in POLRMT to enable promoter opening and trapping of the DNA non-template strand. Upon metabolic stress, forms a complex composed of FOXO3, SIRT3 and mitochondrial RNA polymerase POLRMT; the complex is recruited to mtDNA in a SIRT3-dependent manner. Also forms a complex composed of FOXO3, SIRT3, TFAM and POLRMT. Interacts with TFB1M and TFB2M, leading to the stimulation of transcription. Interacts with TEFM. Interacts with MTRES1.

Its subcellular location is the mitochondrion. It carries out the reaction RNA(n) + a ribonucleoside 5'-triphosphate = RNA(n+1) + diphosphate. Its function is as follows. DNA-dependent RNA polymerase catalyzes the transcription of mitochondrial DNA into RNA using the four ribonucleoside triphosphates as substrates. Component of the mitochondrial transcription initiation complex, composed at least of TFB2M, TFAM and POLRMT that is required for basal transcription of mitochondrial DNA. In this complex, TFAM recruits POLRMT to a specific promoter whereas TFB2M induces structural changes in POLRMT to enable promoter opening and trapping of the DNA non-template strand. Has DNA primase activity. Catalyzes the synthesis of short RNA primers that are necessary for the initiation of lagging-strand DNA synthesis from the origin of light-strand DNA replication (OriL). The sequence is that of DNA-directed RNA polymerase, mitochondrial from Homo sapiens (Human).